The primary structure comprises 326 residues: Ketol-acid reductoisomerase (NADP(+)) (326 aa).

One can recognise a KARI N-terminal Rossmann domain in the interval 1–180 (MDIIHDNAAD…GLTRGGVLEC (180 aa)). NADP(+) is bound by residues 24 to 27 (YGAQ), Arg47, and Ser51. His106 is a catalytic residue. Gly132 provides a ligand contact to NADP(+). The 146-residue stretch at 181 to 326 (TMAQETYEDL…AKIRSLFERN (146 aa)) folds into the KARI C-terminal knotted domain. Asp189, Glu193, Glu225, and Glu229 together coordinate Mg(2+). Residue Ser250 coordinates substrate.

It belongs to the ketol-acid reductoisomerase family. It depends on Mg(2+) as a cofactor.

The enzyme catalyses (2R)-2,3-dihydroxy-3-methylbutanoate + NADP(+) = (2S)-2-acetolactate + NADPH + H(+). It carries out the reaction (2R,3R)-2,3-dihydroxy-3-methylpentanoate + NADP(+) = (S)-2-ethyl-2-hydroxy-3-oxobutanoate + NADPH + H(+). It functions in the pathway amino-acid biosynthesis; L-isoleucine biosynthesis; L-isoleucine from 2-oxobutanoate: step 2/4. The protein operates within amino-acid biosynthesis; L-valine biosynthesis; L-valine from pyruvate: step 2/4. Involved in the biosynthesis of branched-chain amino acids (BCAA). Catalyzes an alkyl-migration followed by a ketol-acid reduction of (S)-2-acetolactate (S2AL) to yield (R)-2,3-dihydroxy-isovalerate. In the isomerase reaction, S2AL is rearranged via a Mg-dependent methyl migration to produce 3-hydroxy-3-methyl-2-ketobutyrate (HMKB). In the reductase reaction, this 2-ketoacid undergoes a metal-dependent reduction by NADPH to yield (R)-2,3-dihydroxy-isovalerate. The polypeptide is Ketol-acid reductoisomerase (NADP(+)) (Akkermansia muciniphila (strain ATCC BAA-835 / DSM 22959 / JCM 33894 / BCRC 81048 / CCUG 64013 / CIP 107961 / Muc)).